Reading from the N-terminus, the 338-residue chain is Malate dehydrogenase, mitochondrial (338 aa).

Residues 1-24 constitute a mitochondrion transit peptide; it reads MLSALARPASAVLRRSFSTSAQNN. NAD(+)-binding positions include 31–37 and Asp57; that span reads GASGGIG. O-linked (GlcNAc) serine glycosylation is present at Ser33. N6-acetyllysine; alternate occurs at positions 78 and 91. Residues Lys78 and Lys91 each carry the N6-succinyllysine; alternate modification. Substrate is bound by residues Arg104 and Arg110. Residues Asn117 and 140-142 each bind NAD(+); that span reads IAN. Asn142 provides a ligand contact to substrate. The residue at position 165 (Lys165) is an N6-acetyllysine. Arg176 is a substrate binding site. At Lys185 the chain carries N6-acetyllysine; alternate. Lys185 bears the N6-succinyllysine; alternate mark. His200 functions as the Proton acceptor in the catalytic mechanism. Position 203 is an N6-succinyllysine (Lys203). Residues Lys215 and Lys239 each carry the N6-acetyllysine; alternate modification. 2 positions are modified to N6-succinyllysine; alternate: Lys215 and Lys239. Lys239 carries the post-translational modification N6-malonyllysine; alternate. The residue at position 246 (Ser246) is a Phosphoserine. Residue Met251 coordinates NAD(+). Lys269 is subject to N6-succinyllysine. N6-acetyllysine; alternate is present on residues Lys296, Lys301, Lys307, Lys314, and Lys324. N6-succinyllysine; alternate is present on residues Lys296, Lys301, Lys307, Lys314, and Lys324. An N6-malonyllysine; alternate modification is found at Lys307. Position 326 is a phosphoserine (Ser326). N6-acetyllysine; alternate is present on residues Lys328, Lys329, and Lys335. Lys328 bears the N6-succinyllysine; alternate mark. The residue at position 329 (Lys329) is an N6-malonyllysine; alternate. The residue at position 335 (Lys335) is an N6-succinyllysine; alternate.

Belongs to the LDH/MDH superfamily. MDH type 1 family. Homodimer. Post-translationally, acetylation is enhanced after treatment either with trichostin A (TCA) or with nicotinamide (NAM) with the appearance of tri- and tetraacetylations. Glucose also increases acetylation.

Its subcellular location is the mitochondrion matrix. The catalysed reaction is (S)-malate + NAD(+) = oxaloacetate + NADH + H(+). Its activity is regulated as follows. Enzyme activity is enhanced by acetylation. The polypeptide is Malate dehydrogenase, mitochondrial (MDH2) (Pongo abelii (Sumatran orangutan)).